A 172-amino-acid polypeptide reads, in one-letter code: L-methionine sulfoximine/L-methionine sulfone acetyltransferase (172 aa).

The N-acetyltransferase domain occupies 3 to 166; sequence ASIRDAGVAD…DLTFMQLNLD (164 aa). Substrate contacts are provided by residues 75 to 77 and 85 to 87; these read RPF and EHS. Acetyl-CoA contacts are provided by residues 88 to 90, 96 to 101, and N127; these read VYV and GKGLGV.

Homodimer.

The catalysed reaction is L-methionine sulfoximine + acetyl-CoA = N-acetyl-L-methionine sulfoximine + CoA + H(+). It catalyses the reaction L-methionine sulfone + acetyl-CoA = N-acetyl-L-methionine sulfone + CoA + H(+). Functionally, plays a role in the resistance against the toxic effects of L-methionine sulfoximine (MSX), a rare amino acid, which inhibits glutamine synthetase (GlnA). Catalyzes the acetylation of L-methionine sulfoximine (MSX). In Pseudomonas aeruginosa (strain ATCC 15692 / DSM 22644 / CIP 104116 / JCM 14847 / LMG 12228 / 1C / PRS 101 / PAO1), this protein is L-methionine sulfoximine/L-methionine sulfone acetyltransferase.